The primary structure comprises 73 residues: Alpha-amylase inhibitor Paim-1 (73 aa).

Disulfide bonds link Cys8-Cys24 and Cys42-Cys70.

Its function is as follows. Inhibits mammalian alpha-amylases specifically but has no action on plant and microbial alpha-amylases. The polypeptide is Alpha-amylase inhibitor Paim-1 (Streptomyces olivaceoviridis (Streptomyces corchorusii)).